Reading from the N-terminus, the 142-residue chain is Putative thiosulfate sulfurtransferase, mitochondrial (142 aa).

The N-terminal 25 residues, 1–25 (MFSKTLSVSRLLMTRSFYSSTVVKN), are a transit peptide targeting the mitochondrion. Positions 43–140 (GDKSTVLIDV…SWLEWSDKIK (98 aa)) constitute a Rhodanese domain. Cys-104 acts as the Cysteine persulfide intermediate in catalysis.

The protein resides in the mitochondrion. The enzyme catalyses thiosulfate + hydrogen cyanide = thiocyanate + sulfite + 2 H(+). Its function is as follows. Thiosulfate sulfurtransferase which catalyzes the transfer of sulfane sulfur from thiosulfate to cyanide. This chain is Putative thiosulfate sulfurtransferase, mitochondrial, found in Schizosaccharomyces pombe (strain 972 / ATCC 24843) (Fission yeast).